A 227-amino-acid polypeptide reads, in one-letter code: PKHD-type hydroxylase Bphy_5374 (227 aa).

Residues 79-179 enclose the Fe2OG dioxygenase domain; that stretch reads KVYPPLFNRY…RVASFFWVQS (101 aa). Fe cation contacts are provided by His97, Asp99, and His160. Position 170 (Arg170) interacts with 2-oxoglutarate.

The cofactor is Fe(2+). L-ascorbate is required as a cofactor.

The sequence is that of PKHD-type hydroxylase Bphy_5374 from Paraburkholderia phymatum (strain DSM 17167 / CIP 108236 / LMG 21445 / STM815) (Burkholderia phymatum).